Reading from the N-terminus, the 217-residue chain is Ras-related protein RABA2a (217 aa).

Glycine 19 to serine 26 lines the GTP pocket. The Effector region motif lies at serine 41–phenylalanine 49. GTP is bound by residues aspartate 67–glutamine 71, asparagine 125–aspartate 128, and serine 155–alanine 156. Cysteine 213 is lipidated: S-palmitoyl cysteine. Cysteine 214 bears the Cysteine methyl ester mark. Residue cysteine 214 is the site of S-geranylgeranyl cysteine attachment. Positions serine 215 to serine 217 are cleaved as a propeptide — removed in mature form.

This sequence belongs to the small GTPase superfamily. Rab family. In terms of tissue distribution, expressed in root tips.

The protein resides in the endosome membrane. It localises to the golgi apparatus. Its subcellular location is the trans-Golgi network membrane. Functionally, intracellular vesicle trafficking and protein transport. The sequence is that of Ras-related protein RABA2a (RABA2A) from Arabidopsis thaliana (Mouse-ear cress).